The chain runs to 329 residues: DNA-directed RNA polymerase subunit alpha (329 aa).

The segment at 1-234 (MSGSVTEFLK…EQLDAFVELR (234 aa)) is alpha N-terminal domain (alpha-NTD). The interval 248 to 329 (FDPILLRPVD…WPPESIAEKD (82 aa)) is alpha C-terminal domain (alpha-CTD).

It belongs to the RNA polymerase alpha chain family. Homodimer. The RNAP catalytic core consists of 2 alpha, 1 beta, 1 beta' and 1 omega subunit. When a sigma factor is associated with the core the holoenzyme is formed, which can initiate transcription.

It catalyses the reaction RNA(n) + a ribonucleoside 5'-triphosphate = RNA(n+1) + diphosphate. DNA-dependent RNA polymerase catalyzes the transcription of DNA into RNA using the four ribonucleoside triphosphates as substrates. This is DNA-directed RNA polymerase subunit alpha from Pseudoalteromonas atlantica (strain T6c / ATCC BAA-1087).